Here is a 468-residue protein sequence, read N- to C-terminus: Protein C-ets-2 (468 aa).

In terms of domain architecture, PNT spans 85 to 170; the sequence is ATFSGFQKEQ…EHLEQMIKEN (86 aa). Residues Ser-220 and Ser-225 each carry the phosphoserine modification. Residues 262–290 are disordered; that stretch reads VNLLNNNSGKPKDHDSPENGGDSFESSDS. 3 positions are modified to phosphoserine: Ser-294, Ser-297, and Ser-300. A DNA-binding region (ETS) is located at residues 362–442; it reads IQLWQFLLEL…SGKRYVYRFV (81 aa).

Belongs to the ETS family. Phosphorylation by CDK10 at Ser-220 and Ser-225 creates a phosphodegron that targets ETS2 for proteasomal degradation.

It localises to the nucleus. Transcription factor activating transcription. Binds specifically the GGA DNA motif in gene promoters and stimulates transcription of those genes. The sequence is that of Protein C-ets-2 (Ets2) from Mus musculus (Mouse).